The chain runs to 704 residues: MQDERPVDQLTEAEAAAELARLAEAIEAANTAYHTHDAPQISDADYDALKVRNRAIEEQFPELRRSDSPSDRVGGALAEGFAKVRHDVRMLSLENAFDLAEVEDWIERIRRYLGHVGDLLFTAEPKIDGLSLSLRYEKGRLVQAATRGDGETGENVTENARTIADLPTELDGAPDLLEVRGEVYMSHEDFAALNGRQEAAGQRLFANPRNAAAGSLRQLDPAVTASRPLRFFAYAWGAHSEPLAATQHEAIARLAALGFATNPLTRLCTGPEELLAQHAQIERQRAALGYDIDGVVYKVDDLALQRRLGFRASTPRWAIAHKFAAQLAWTQLEGIDIQVGRTGALSPVARLKPVTVGGVVVANATLHNEDYIAGRDSKGQEIRGGKDIRVGDWVQVYRAGDVIPKVADVDLDRRPEGAAPYRFPETCPECGSEAIREPGDSVRRCTGGLICPAQQVERLKHFVSRAAFDIEGLGAKQVEALWRDGWIRQPADIFELPNRYRDGMQRLENREGWGRKSAENLFAAIEARRRIALHRLIFALGIRHVGETTATLLATHYGSWAAFEAAMTRAEVGAGPEWQDLLSIDGVGAVLATSLVTAFHQEAERAAVDALAAHLTVEDAEVRAPVASPVAGKIVVFTGTLEKMSRAEAKARAEALGAKVSGSVSARTDLVVAGPGAGSKAKQAAALGIETIDEDGWLRLIGDA.

Residues 43–47, 92–93, and Glu124 contribute to the NAD(+) site; these read DADYD and SL. Residue Lys126 is the N6-AMP-lysine intermediate of the active site. Positions 147, 182, 298, and 322 each coordinate NAD(+). Zn(2+)-binding residues include Cys427, Cys430, Cys445, and Cys451. A BRCT domain is found at 625–704; it reads PVASPVAGKI…DGWLRLIGDA (80 aa).

Belongs to the NAD-dependent DNA ligase family. LigA subfamily. Mg(2+) is required as a cofactor. Mn(2+) serves as cofactor.

It catalyses the reaction NAD(+) + (deoxyribonucleotide)n-3'-hydroxyl + 5'-phospho-(deoxyribonucleotide)m = (deoxyribonucleotide)n+m + AMP + beta-nicotinamide D-nucleotide.. DNA ligase that catalyzes the formation of phosphodiester linkages between 5'-phosphoryl and 3'-hydroxyl groups in double-stranded DNA using NAD as a coenzyme and as the energy source for the reaction. It is essential for DNA replication and repair of damaged DNA. In Cereibacter sphaeroides (strain ATCC 17023 / DSM 158 / JCM 6121 / CCUG 31486 / LMG 2827 / NBRC 12203 / NCIMB 8253 / ATH 2.4.1.) (Rhodobacter sphaeroides), this protein is DNA ligase.